The following is a 786-amino-acid chain: Signal transducer and activator of transcription 5B (786 aa).

Tyr-90 is modified (phosphotyrosine). Ser-128 is modified (phosphoserine). Positions 589-686 (WNDGAILGFV…EVYSKYYTPV (98 aa)) constitute an SH2 domain. Phosphotyrosine occurs at positions 682 and 699.

It belongs to the transcription factor STAT family. In terms of assembly, upon activation, forms a homodimer or a heterodimer with a related family member. Binds NR3C1. Interacts with NCOA1. Interacts with SOCS7. Interacts (via SH2 domain) with INSR. Interacts with CPEB3; this inhibits STAT5B-mediated transcriptional activation. In terms of processing, tyrosine phosphorylated in response to signaling via activated KIT, resulting in translocation to the nucleus. Tyrosine phosphorylated in response to signaling via activated FLT3; wild-type FLT3 results in much weaker phosphorylation than constitutively activated mutant FLT3. Alternatively, can be phosphorylated by JAK2. Phosphorylation at Tyr-699 by PTK6 or HCK leads to an increase of its transcriptional activity. As to expression, in the virgin, found in most tissues. Particularly abundant in muscle tissue of virgin and lactating females, and of males.

The protein resides in the cytoplasm. Its subcellular location is the nucleus. Its function is as follows. Carries out a dual function: signal transduction and activation of transcription. Mediates cellular responses to the cytokine KITLG/SCF and other growth factors. Binds to the GAS element and activates PRL-induced transcription. Positively regulates hematopoietic/erythroid differentiation. The protein is Signal transducer and activator of transcription 5B (Stat5b) of Mus musculus (Mouse).